A 496-amino-acid polypeptide reads, in one-letter code: Putative zinc finger CCCH domain-containing protein 48 (496 aa).

2 disordered regions span residues methionine 1–histidine 77 and methionine 108–aspartate 194. Positions histidine 143–tyrosine 156 are enriched in acidic residues. C3H1-type zinc fingers lie at residues glutamate 377–aspartate 406, lysine 439–valine 467, and leucine 469–tyrosine 496.

The chain is Putative zinc finger CCCH domain-containing protein 48 from Oryza sativa subsp. japonica (Rice).